Here is a 501-residue protein sequence, read N- to C-terminus: Probable pectate lyase 13 (501 aa).

The N-terminal stretch at 1 to 22 is a signal peptide; that stretch reads MLLQNFSNTIFLLCLFFTLLSA. N-linked (GlcNAc...) asparagine glycans are attached at residues asparagine 27 and asparagine 49. The tract at residues 55–78 is disordered; it reads RQLSSPSSSSSSSSSSSSSSCRTG. Residues 58-74 show a composition bias toward low complexity; the sequence is SSPSSSSSSSSSSSSSS. Aspartate 217, aspartate 241, and aspartate 245 together coordinate Ca(2+). The active site involves arginine 297. Disordered regions lie at residues 329 to 359 and 408 to 463; these read INSQ…DGEW and NAGV…SSGD. The segment covering 343 to 357 has biased composition (basic and acidic residues); sequence SAKEVTKRVDSKDDG. The span at 430 to 449 shows a compositional bias: gly residues; the sequence is GGDGGGGGSSGGSSGGGMDV. The segment covering 450-463 has biased composition (low complexity); it reads MGGTTRGSSSSSGD. Residue serine 474 is the site of GPI-anchor amidated serine attachment. The propeptide at 475-501 is removed in mature form; that stretch reads DAPSRPRLTLLFSLLMISVLSLSTLLL.

It belongs to the polysaccharide lyase 1 family. Ca(2+) serves as cofactor. In terms of tissue distribution, expressed equally in mature leaves, buds, flowers, rosettes and roots.

The protein localises to the cell membrane. It catalyses the reaction Eliminative cleavage of (1-&gt;4)-alpha-D-galacturonan to give oligosaccharides with 4-deoxy-alpha-D-galact-4-enuronosyl groups at their non-reducing ends.. It participates in glycan metabolism; pectin degradation; 2-dehydro-3-deoxy-D-gluconate from pectin: step 2/5. In terms of biological role, susceptibility factor required for infection by most powdery mildews, but not by unrelated pathogens. Exact function not known, but clearly affects cell wall composition. This chain is Probable pectate lyase 13 (PMR6), found in Arabidopsis thaliana (Mouse-ear cress).